A 131-amino-acid chain; its full sequence is U-scoloptoxin-Er5e (131 aa).

The signal sequence occupies residues 1 to 22; sequence MKTNCEFPLLCLLIVLVANVEG. Positions 23–94 are excised as a propeptide; sequence EVEDNELKMV…KRLWRNWERR (72 aa). RLWRNWE repeat units follow at residues 34 to 40, 61 to 67, and 86 to 92; these read RLWRNWE. Pyrrolidone carboxylic acid is present on Q95. Residues 107–113 form an RLWRNWE 4; approximate repeat; the sequence is ELWRNWE. Residues 112–131 constitute a propeptide that is removed on maturation; it reads WEDLKRRQVVDLNDEQKTTG.

The protein belongs to the scoloptoxin-08 family. As to expression, expressed by the venom gland.

Its subcellular location is the secreted. The sequence is that of U-scoloptoxin-Er5e from Ethmostigmus rubripes (Giant centipede).